Here is a 662-residue protein sequence, read N- to C-terminus: Glutathione hydrolase 7 (662 aa).

At 1–106 (MAAENEASQE…ASECSCRQDG (106 aa)) the chain is on the cytoplasmic side. Phosphoserine is present on residues Ser17, Ser72, Ser79, and Ser83. Residues 26–90 (SFPRLPEDEP…DGSPLRETRK (65 aa)) form a disordered region. Over residues 72–83 (SSSSEMGSQDGS) the composition is skewed to low complexity. The helical; Signal-anchor for type II membrane protein transmembrane segment at 107-127 (LTVIVTACLTFATGVTVALIM) threads the bilayer. At 128–662 (QIYFGDPQIF…SPDAAGATIL (535 aa)) the chain is on the extracellular side. N-linked (GlcNAc...) asparagine glycans are attached at residues Asn198, Asn267, Asn283, Asn330, Asn353, Asn394, Asn452, Asn519, and Asn586.

The protein belongs to the gamma-glutamyltransferase family. As to quaternary structure, heterodimer composed of the light and heavy chains. The active site is located in the light chain. In terms of processing, cleaved by autocatalysis into a large and a small subunit and the autocatalytic cleavage is essential to the functional activation of the enzyme.

The protein resides in the membrane. It catalyses the reaction an N-terminal (5-L-glutamyl)-[peptide] + an alpha-amino acid = 5-L-glutamyl amino acid + an N-terminal L-alpha-aminoacyl-[peptide]. The enzyme catalyses glutathione + H2O = L-cysteinylglycine + L-glutamate. The catalysed reaction is an S-substituted glutathione + H2O = an S-substituted L-cysteinylglycine + L-glutamate. Its pathway is sulfur metabolism; glutathione metabolism. Functionally, hydrolyzes and transfers gamma-glutamyl moieties from glutathione and other gamma-glutamyl compounds to acceptors. This chain is Glutathione hydrolase 7, found in Bos taurus (Bovine).